The following is a 465-amino-acid chain: Azaphilone cluster-specific transcription factor azaR (465 aa).

A compositionally biased stretch (low complexity) spans Met-1–His-16. The tract at residues Met-1 to Ser-25 is disordered. Positions Cys-27–Cys-53 form a DNA-binding region, zn(2)-C6 fungal-type.

Its subcellular location is the nucleus. Functionally, transcription factor that regulates the expression of the gene cluster that mediates the biosynthesis of azaphilones, a class of fungal metabolites characterized by a highly oxygenated pyrano-quinone bicyclic core and exhibiting a broad range of bioactivities. This Aspergillus niger (strain ATCC 1015 / CBS 113.46 / FGSC A1144 / LSHB Ac4 / NCTC 3858a / NRRL 328 / USDA 3528.7) protein is Azaphilone cluster-specific transcription factor azaR.